A 190-amino-acid chain; its full sequence is GTP cyclohydrolase 1 (190 aa).

Residues Cys-80, His-83, and Cys-151 each coordinate Zn(2+).

This sequence belongs to the GTP cyclohydrolase I family. Toroid-shaped homodecamer, composed of two pentamers of five dimers.

It catalyses the reaction GTP + H2O = 7,8-dihydroneopterin 3'-triphosphate + formate + H(+). It participates in cofactor biosynthesis; 7,8-dihydroneopterin triphosphate biosynthesis; 7,8-dihydroneopterin triphosphate from GTP: step 1/1. The chain is GTP cyclohydrolase 1 from Rickettsia felis (strain ATCC VR-1525 / URRWXCal2) (Rickettsia azadi).